Here is a 362-residue protein sequence, read N- to C-terminus: Innexin inx1 (362 aa).

Over 1 to 28 (MYKLLGSLKSYLKWQDIQTDNAVFRLHN) the chain is Cytoplasmic. A helical membrane pass occupies residues 29 to 49 (SFTTVLLLTCSLIITATQYVG). The Extracellular segment spans residues 50–110 (QPISCIVNGV…DAKKYYTYYQ (61 aa)). A helical membrane pass occupies residues 111-131 (WVCFVLFFQAMACYTPKFLWN). Residues 132-177 (KFEGGLMRMIVMGLNITICTREEKEAKRDALLDYLIKHVKRHKLYA) are Cytoplasmic-facing. Residues 178 to 198 (IRYWACEFLCCINIIVQMYLM) form a helical membrane-spanning segment. The Extracellular segment spans residues 199 to 267 (NRFFDGEFLS…LPLNIVNEKT (69 aa)). A helical transmembrane segment spans residues 268–288 (YVFIWFWFWILLVLLIGLIVF). At 289–362 (RGCIIFMPKF…VEPSKHDRAK (74 aa)) the chain is on the cytoplasmic side.

It belongs to the pannexin family. In terms of assembly, heterooligomer of Inx2 and ogre. In ovary, expressed in follicle cells. Expressed around the periphery of the embryo during cellular blastoderm formation. Repeating epidermal pattern emerges from stage 11, high levels of expression detected along the borders of each segment from stage 13. At stage 13, expressed in the dorsal branch of the tracheal system. During stage 15, detected in a few cells at each of the branch points of the dorsal trunk and at low levels in cardioblasts. In embryos, also expressed in the salivary gland and the hindgut (at protein level). At stage 17, expressed in the dorsal side of the CNS. Expressed in the imaginal wing disk. Expressed in larval CNS and in tissues outside of the CNS. In pupae, expressed in the CNS and in primary, secondary and tertiary pigment cells of the retina.

The protein resides in the cell membrane. The protein localises to the cell junction. It is found in the gap junction. Its subcellular location is the basolateral cell membrane. In terms of biological role, structural component of the gap junctions. Essential for generation and/or maintenance of postembryonic neuroblasts and normal development of optic lobe. The protein is Innexin inx1 (ogre) of Drosophila melanogaster (Fruit fly).